Here is a 397-residue protein sequence, read N- to C-terminus: Beta-lactamase (397 aa).

The signal sequence occupies residues 1-26 (MRDTRFPCLCGIAASTLLFATTPAIA). Residue Ser90 is the Acyl-ester intermediate of the active site. The a beta-lactam site is built by Ser90, Gln146, Tyr177, Asn179, and Asn370. The Proton acceptor role is filled by Tyr177.

The protein belongs to the class-C beta-lactamase family. In terms of assembly, monomer.

It is found in the periplasm. It catalyses the reaction a beta-lactam + H2O = a substituted beta-amino acid. In terms of biological role, class C beta-lactamase which confers resistance to penicillins and cephalosporins. Has nitrocefin-hydrolyzing activity. This is Beta-lactamase (ampC) from Pseudomonas aeruginosa (strain ATCC 15692 / DSM 22644 / CIP 104116 / JCM 14847 / LMG 12228 / 1C / PRS 101 / PAO1).